The chain runs to 487 residues: b(0,+)-type amino acid transporter 1 (487 aa).

A compositionally biased stretch (basic and acidic residues) spans 1–15 (MGDTGLRKRREDEKS). The segment at 1–22 (MGDTGLRKRREDEKSIQSQEPK) is disordered. Residues 1-31 (MGDTGLRKRREDEKSIQSQEPKTTSLQKELG) are Cytoplasmic-facing. Ser-18 carries the post-translational modification Phosphoserine. Residues 32-55 (LISGISIIVGTIIGSGIFVSPKSV) form a helical membrane-spanning segment. L-arginine is bound at residue 43–47 (IIGSG). Residues 56-62 (LSNTEAV) are Extracellular-facing. Residues 63–84 (GPCLIIWAACGVLATLGALCFA) traverse the membrane as a helical segment. Topologically, residues 85–110 (ELGTMITKSGGEYPYLMEAYGPIPAY) are cytoplasmic. Residues 111-137 (LFSWASLIVIKPTSFAIICLSFSEYVC) form a helical membrane-spanning segment. The Extracellular segment spans residues 138 to 147 (APFYVGCKPP). The next 2 membrane-spanning stretches (helical) occupy residues 148–169 (QIVV…NSLS) and 170–193 (VRLG…IIII). Residues 194-217 (SGLVLLAQGNTKNFDNSFEGAQLS) lie on the Extracellular side of the membrane. The helical transmembrane segment at 218–238 (VGAISLAFYNGLWAYDGWNQL) threads the bilayer. Asp-233 provides a ligand contact to L-arginine. Topologically, residues 239–251 (NYITEELRNPYRN) are cytoplasmic. The helical transmembrane segment at 252-274 (LPLAIIIGIPLVTACYILMNVSY) threads the bilayer. Topologically, residues 275–302 (FTVMTATELLQSQAVAVTFGDRVLYPAS) are extracellular. A helical transmembrane segment spans residues 303–325 (WIVPLFVAFSTIGAANGTCFTAG). Over 326 to 351 (RLIYVAGREGHMLKVLSYISVRRLTP) the chain is Cytoplasmic. 2 helical membrane passes run 352–370 (APAI…IPGD) and 371–391 (INSL…LTIL). At 392 to 410 (GLIVMRFTRKELERPIKVP) the chain is on the cytoplasmic side. A helical membrane pass occupies residues 411-431 (VVIPVLMTLISVFLVLAPIIS). Over 432 to 434 (KPT) the chain is Extracellular. The chain crosses the membrane as a helical span at residues 435 to 450 (WEYLYCVLFILSGLLF). Over 451-487 (YFLFVHYKFGWAQKISKPITMHLQMLMEVVPPEEDPE) the chain is Cytoplasmic.

Belongs to the amino acid-polyamine-organocation (APC) superfamily. In terms of assembly, disulfide-linked heterodimer composed of the catalytic light chain subunit SLC7A9 and the heavy chain subunit SLC3A1. The heterodimer is the minimal functional unit. Assembles in heterotetramers (dimers of heterodimers) and higher order oligomers; the oligomerization is mediated by SLC3A1 likely to prevent degradation and facilitate heteromer trafficking to the plasma membrane. Interacts with CAV1. As to expression, expressed in the brush border membrane in the kidney (at protein level). Kidney, small intestine, liver and placenta.

It localises to the apical cell membrane. Its subcellular location is the cell membrane. The enzyme catalyses L-leucine(out) + L-arginine(in) = L-leucine(in) + L-arginine(out). It catalyses the reaction L-histidine(out) + L-arginine(in) = L-histidine(in) + L-arginine(out). The catalysed reaction is L-arginine(in) + L-phenylalanine(out) = L-arginine(out) + L-phenylalanine(in). It carries out the reaction L-cysteine(out) + L-arginine(in) = L-cysteine(in) + L-arginine(out). The enzyme catalyses L-cystine(out) + L-arginine(in) = L-cystine(in) + L-arginine(out). It catalyses the reaction L-lysine(out) + L-arginine(in) = L-lysine(in) + L-arginine(out). Its function is as follows. Associates with SLC3A1 to form a functional transporter complex that mediates the electrogenic exchange between cationic amino acids and neutral amino acids, with a stoichiometry of 1:1. Has system b(0,+)-like activity with high affinity for extracellular cationic amino acids and L-cystine and lower affinity for intracellular neutral amino acids. Substrate exchange is driven by high concentration of intracellular neutral amino acids and the intracellular reduction of L-cystine to L-cysteine. Required for reabsorption of L-cystine and dibasic amino acids across the brush border membrane in renal proximal tubules. The protein is b(0,+)-type amino acid transporter 1 of Homo sapiens (Human).